A 158-amino-acid polypeptide reads, in one-letter code: 6,7-dimethyl-8-ribityllumazine synthase (158 aa).

5-amino-6-(D-ribitylamino)uracil is bound by residues F22, 57 to 59 (AVE), and 81 to 83 (AVI). 86-87 (GT) serves as a coordination point for (2S)-2-hydroxy-3-oxobutyl phosphate. H89 (proton donor) is an active-site residue. F114 is a 5-amino-6-(D-ribitylamino)uracil binding site. R128 is a binding site for (2S)-2-hydroxy-3-oxobutyl phosphate.

The protein belongs to the DMRL synthase family. As to quaternary structure, forms an icosahedral capsid composed of 60 subunits, arranged as a dodecamer of pentamers.

It catalyses the reaction (2S)-2-hydroxy-3-oxobutyl phosphate + 5-amino-6-(D-ribitylamino)uracil = 6,7-dimethyl-8-(1-D-ribityl)lumazine + phosphate + 2 H2O + H(+). The protein operates within cofactor biosynthesis; riboflavin biosynthesis; riboflavin from 2-hydroxy-3-oxobutyl phosphate and 5-amino-6-(D-ribitylamino)uracil: step 1/2. Its function is as follows. Catalyzes the formation of 6,7-dimethyl-8-ribityllumazine by condensation of 5-amino-6-(D-ribitylamino)uracil with 3,4-dihydroxy-2-butanone 4-phosphate. This is the penultimate step in the biosynthesis of riboflavin. This Shewanella halifaxensis (strain HAW-EB4) protein is 6,7-dimethyl-8-ribityllumazine synthase.